A 1029-amino-acid polypeptide reads, in one-letter code: Collagen, type I, alpha 1b (1029 aa).

The disordered stretch occupies residues 1–990 (QMSYVDHSKS…KAPDPFRGGH (990 aa)). Positions 13 to 33 (PPQPGPMGPMGPRGPPGPPGS) are enriched in pro residues. Residues 34–57 (SGPQGFTGPPGEPGEPGASGAMGS) are compositionally biased toward low complexity. The segment covering 67 to 81 (NGDDGEPGKPGRPGE) has biased composition (basic and acidic residues). Composition is skewed to low complexity over residues 82 to 91 (RGAAGPQGAR), 120 to 129 (VPGVMGARGR), and 136 to 147 (SGARGNDGNTGP). The segment covering 163–182 (PGGAGAKGETGPAGGRGNEG) has biased composition (gly residues). Low complexity-rich tracts occupy residues 199-223 (AGPA…AGLA), 233-267 (AQGA…PGPA), and 299-309 (ERGAPGARGFP). Positions 310–322 (GADGGAGGKGAPG) are enriched in gly residues. 2 stretches are compositionally biased toward low complexity: residues 323–351 (ERGA…PGSK) and 429–465 (VGAP…QGAT). The segment covering 466 to 477 (GETGKGLGGPTG) has biased composition (gly residues). Residues 478-497 (PRGAPGPAGNDGAKGEPGAA) are compositionally biased toward low complexity. Composition is skewed to gly residues over residues 498–507 (GAPGGLGAPG) and 531–540 (GGKGGDGAPG). Low complexity-rich tracts occupy residues 571–580 (VAGPTGPRGA) and 593–620 (AGFA…KGDA). 2 stretches are compositionally biased toward gly residues: residues 621-630 (GAPGPGGPVG) and 645-654 (GARGGAGPPG). Composition is skewed to low complexity over residues 655 to 665 (ATGFPGPAGRV), 694 to 722 (ETGA…PGXD), 731 to 743 (PQGL…LPGQ), 830 to 839 (APGAVGPSGK), and 855 to 869 (SGPA…PAGA). A compositionally biased stretch (basic and acidic residues) spans 870 to 884 (KGDRGEAGEAGDRGG). Positions 906–934 (PAGASGPAGPRGPAGSNGAPGKDGMNGLP) are enriched in low complexity. A compositionally biased stretch (pro residues) spans 952 to 967 (AGPPGPPGPAGPPGPP). The Fibrillar collagen NC1 domain occupies 999 to 1029 (TQKLPLLDLAPMDVGAPDQEFGVEVGPVCFL).

This sequence belongs to the fibrillar collagen family.

The protein resides in the secreted. It localises to the extracellular space. Its subcellular location is the extracellular matrix. This Epinephelus aeneus (White grouper) protein is Collagen, type I, alpha 1b.